Reading from the N-terminus, the 183-residue chain is Ribosome-recycling factor (183 aa).

The protein belongs to the RRF family.

Its subcellular location is the cytoplasm. In terms of biological role, responsible for the release of ribosomes from messenger RNA at the termination of protein biosynthesis. May increase the efficiency of translation by recycling ribosomes from one round of translation to another. This is Ribosome-recycling factor from Ureaplasma parvum serovar 3 (strain ATCC 27815 / 27 / NCTC 11736).